A 1451-amino-acid chain; its full sequence is ARF guanine-nucleotide exchange factor GNOM (1451 aa).

The tract at residues 1–246 (MGRLKLHSGI…VNRAGSIKQE (246 aa)) is DCB domain. Positions 557-752 (RRKYIKRRLM…NEIRTTPEQG (196 aa)) constitute an SEC7 domain. The active site involves glutamate 658. Positions 1430–1451 (SQLGDDETVSNGLSSPENTTGS) are disordered.

As to quaternary structure, homodimer. Interacts with CYP19-4/CYP5 in vitro. As to expression, stems, leaves, flowers, siliques, floral inflorescence and roots. Expressed in the whole plant (at the protein level).

The protein resides in the cytoplasm. Its subcellular location is the cytosol. It localises to the endosome membrane. The protein localises to the cell membrane. With respect to regulation, inhibited by brefeldin A (BFA). In terms of biological role, activates the ARF proteins by exchanging bound GDP for free GTP. Plays a role in vesicular protein sorting. Acts as the major regulator of endosomal vesicle trafficking but is also involved in the endocytosis process. Could function redundantly with GNL1 in the retrograde Golgi to endoplasmic reticulum trafficking. Regulates vesicle trafficking required for the coordinated polar localization of auxin efflux carriers which in turn determines the direction of auxin flow. Mediates the sorting of PIN1 from endosomal compartments to the basal plasma membrane and the polarization of PIN3 to the bottom side of hypocotyl endodermal cells. Involved in the specification of apical-basal pattern formation in the early embryo and during root formation. Required for correct cell wall organization leading to normal cell adhesion during seedling development. Also plays an essential role in hydrotropism of seedling roots. The sequence is that of ARF guanine-nucleotide exchange factor GNOM (GN) from Arabidopsis thaliana (Mouse-ear cress).